Here is a 199-residue protein sequence, read N- to C-terminus: MANRGPAYGLSREVQQKIEKQYDADLEQILIQWITTQCRKDVGRPQPGRENFQNWLKDGTVLCELINALYPEGQAPVKKIQASTMAFKQMEQISQFLQAAERYGINTTDIFQTVDLWEGKNMACVQRTLMNLGGLAVARDDGLFSGDPNWFPKKSKENPRNFSDNQLQEGKNVIGLQMGTNRGASQAGMTGYGMPRQIL.

A2 is subject to N-acetylalanine. S11 bears the Phosphoserine mark. An N6-acetyllysine mark is found at K17 and K20. Residues 24-136 (ADLEQILIQW…RTLMNLGGLA (113 aa)) form the Calponin-homology (CH) domain. S163 bears the Phosphoserine mark. K171 participates in a covalent cross-link: Glycyl lysine isopeptide (Lys-Gly) (interchain with G-Cter in SUMO2). Residues 174–199 (IGLQMGTNRGASQAGMTGYGMPRQIL) form a Calponin-like repeat. T180 is modified (phosphothreonine). Omega-N-methylarginine occurs at positions 182 and 196.

This sequence belongs to the calponin family. As to expression, expressed in epididymis (at protein level).

This is Transgelin-2 (TAGLN2) from Homo sapiens (Human).